We begin with the raw amino-acid sequence, 90 residues long: C-C motif chemokine 4 homolog (90 aa).

A signal peptide spans 1 to 21 (MKVSVAALAVLLIAICYQTSA). Intrachain disulfides connect Cys-32–Cys-56 and Cys-33–Cys-72.

It belongs to the intercrine beta (chemokine CC) family. In terms of assembly, homodimer.

The protein resides in the secreted. Functionally, monokine with inflammatory and chemokinetic properties. The polypeptide is C-C motif chemokine 4 homolog (CCL4) (Gallus gallus (Chicken)).